The primary structure comprises 185 residues: Ribosome-recycling factor (185 aa).

This sequence belongs to the RRF family.

It localises to the cytoplasm. In terms of biological role, responsible for the release of ribosomes from messenger RNA at the termination of protein biosynthesis. May increase the efficiency of translation by recycling ribosomes from one round of translation to another. In Lacticaseibacillus casei (strain BL23) (Lactobacillus casei), this protein is Ribosome-recycling factor.